A 173-amino-acid chain; its full sequence is Mediator of RNA polymerase II transcription subunit 10 (173 aa).

Residues 1-10 are compositionally biased toward low complexity; that stretch reads MVQQQQQSQQ. Residues 1–42 form a disordered region; sequence MVQQQQQSQQRMMELHERNDREKLARKTEKEREEERRKQEDD. Over residues 13-42 the composition is skewed to basic and acidic residues; it reads MELHERNDREKLARKTEKEREEERRKQEDD.

The protein belongs to the Mediator complex subunit 10 family. In terms of assembly, component of the Mediator complex.

The protein localises to the nucleus. Functionally, component of the Mediator complex, a coactivator involved in the regulated transcription of nearly all RNA polymerase II-dependent genes. Mediator functions as a bridge to convey information from gene-specific regulatory proteins to the basal RNA polymerase II transcription machinery. Mediator is recruited to promoters by direct interactions with regulatory proteins and serves as a scaffold for the assembly of a functional preinitiation complex with RNA polymerase II and the general transcription factors. Required for germ cell development and for transcriptional activation of certain stage-specific inducible promoters. This chain is Mediator of RNA polymerase II transcription subunit 10 (mdt-10), found in Caenorhabditis elegans.